Here is a 112-residue protein sequence, read N- to C-terminus: Signal peptidase complex-like protein DTM1 (112 aa).

Residues methionine 1–threonine 25 form the signal peptide. Transmembrane regions (helical) follow at residues alanine 33–phenylalanine 53 and methionine 92–serine 112.

Belongs to the SPCS1 family.

The protein resides in the endoplasmic reticulum membrane. Its function is as follows. Functions in tapetum development during early meiosis. May play a role in the endoplasmic reticulum (ER) membrane in the early stages of tapetum development in anthers. Seems to function after MSP1 and before UDT1. The protein is Signal peptidase complex-like protein DTM1 of Oryza sativa subsp. japonica (Rice).